Reading from the N-terminus, the 37-residue chain is Large ribosomal subunit protein bL36c (37 aa).

Belongs to the bacterial ribosomal protein bL36 family.

The protein localises to the plastid. In Cuscuta gronovii (Common dodder), this protein is Large ribosomal subunit protein bL36c.